Reading from the N-terminus, the 181-residue chain is Peptidyl-tRNA hydrolase (181 aa).

Tyrosine 14 is a binding site for tRNA. The Proton acceptor role is filled by histidine 19. TRNA contacts are provided by tyrosine 62, asparagine 64, and asparagine 108.

This sequence belongs to the PTH family. In terms of assembly, monomer.

The protein resides in the cytoplasm. The enzyme catalyses an N-acyl-L-alpha-aminoacyl-tRNA + H2O = an N-acyl-L-amino acid + a tRNA + H(+). Hydrolyzes ribosome-free peptidyl-tRNAs (with 1 or more amino acids incorporated), which drop off the ribosome during protein synthesis, or as a result of ribosome stalling. Its function is as follows. Catalyzes the release of premature peptidyl moieties from peptidyl-tRNA molecules trapped in stalled 50S ribosomal subunits, and thus maintains levels of free tRNAs and 50S ribosomes. The protein is Peptidyl-tRNA hydrolase of Campylobacter jejuni subsp. jejuni serotype O:2 (strain ATCC 700819 / NCTC 11168).